Here is a 159-residue protein sequence, read N- to C-terminus: UPF0262 protein PHZ_c2197 (159 aa).

Belongs to the UPF0262 family.

The sequence is that of UPF0262 protein PHZ_c2197 from Phenylobacterium zucineum (strain HLK1).